A 142-amino-acid chain; its full sequence is ATP synthase epsilon chain (142 aa).

This sequence belongs to the ATPase epsilon chain family. As to quaternary structure, F-type ATPases have 2 components, CF(1) - the catalytic core - and CF(0) - the membrane proton channel. CF(1) has five subunits: alpha(3), beta(3), gamma(1), delta(1), epsilon(1). CF(0) has three main subunits: a, b and c.

The protein localises to the cell inner membrane. Produces ATP from ADP in the presence of a proton gradient across the membrane. The protein is ATP synthase epsilon chain of Shewanella putrefaciens (strain CN-32 / ATCC BAA-453).